Here is a 5141-residue protein sequence, read N- to C-terminus: SCO-spondin (5141 aa).

An N-terminal signal peptide occupies residues 1 to 17; it reads MLLPALLFGMLWAPANG. Residues 18–102 form the EMI domain; it reads HWCEQIETVH…ACCPGWGGIH (85 aa). N-linked (GlcNAc...) asparagine glycosylation is found at Asn-88, Asn-130, Asn-150, and Asn-167. Positions 193 to 364 constitute a VWFD 1 domain; the sequence is ATCATWSGFH…RLPGYEPGCL (172 aa). Intrachain disulfides connect Cys-195–Cys-325, Cys-217–Cys-363, and Cys-239–Cys-245. The TIL 1 domain maps to 472–527; the sequence is CPGGQLYSDCISSCPPSCSAVAQGEEGSCGKECVSGCECPTGLFWDGALCVPAAHC. Residues 565–738 enclose the VWFD 2 domain; it reads AECAVGGDGH…FQVSGDGRCP (174 aa). 2 cysteine pairs are disulfide-bonded: Cys-567-Cys-700 and Cys-591-Cys-737. N-linked (GlcNAc...) asparagine glycans are attached at residues Asn-657 and Asn-822. In terms of domain architecture, TIL 2 spans 830 to 883; that stretch reads CPGGQVYQECAPACGHYCGEPEDCKELGSCVAGCNCPPGLLWDLEGQCVPPSMC. N-linked (GlcNAc...) asparagine glycans are attached at residues Asn-895, Asn-949, and Asn-991. The 171-residue stretch at 1017 to 1187 folds into the VWFD 3 domain; sequence GWCQASGAPH…HSWRLNPLCP (171 aa). Cystine bridges form between Cys-1019-Cys-1151, Cys-1041-Cys-1186, and Cys-1062-Cys-1069. The 57-residue stretch at 1280–1336 folds into the TIL 3 domain; it reads CEGGQVYEPCGSTCPPTCHDHHPELRWHCQAITCVEGCFCPEGTLLHGGTCVELTDC. An N-linked (GlcNAc...) asparagine glycan is attached at Asn-1357. LDL-receptor class A domains lie at 1380–1417, 1420–1456, 1456–1492, and 1496–1534; these read GCAEGEALCRESGHCVPLEWLCDNQDDCGDGSDEEGCD, VCGEGQMSCQSGRCLPLSLICDGQDDCGDGTDEQGCL, LCPQGFLACADGRCLPPALLCDGHPDCLDAADEESCL, and SCTSGEVSCVDGPCIRTIQLCDGVWDCPDGADEGPVHCS. 12 disulfide bridges follow: Cys-1381/Cys-1394, Cys-1388/Cys-1407, Cys-1401/Cys-1416, Cys-1421/Cys-1433, Cys-1428/Cys-1446, Cys-1440/Cys-1455, Cys-1457/Cys-1469, Cys-1464/Cys-1482, Cys-1476/Cys-1491, Cys-1497/Cys-1509, Cys-1504/Cys-1522, and Cys-1516/Cys-1533. The tract at residues 1533–1567 is disordered; it reads CSSPSLPTPPAGIGQNPSTSSPDTSPSPVGSASPA. The span at 1549 to 1567 shows a compositional bias: low complexity; the sequence is PSTSSPDTSPSPVGSASPA. LDL-receptor class A domains are found at residues 1569–1605 and 1607–1646; these read PCSLSEFQCNSGECTPRGWRCDREEDCTDGSDELDCG and PCKLYQMPCAHGPHCLSPGQLCDGVAQCPDGSDEDPDVCE. 6 disulfides stabilise this stretch: Cys-1570/Cys-1582, Cys-1577/Cys-1595, Cys-1589/Cys-1604, Cys-1608/Cys-1621, Cys-1615/Cys-1634, and Cys-1628/Cys-1645. 2 N-linked (GlcNAc...) asparagine glycosylation sites follow: Asn-1655 and Asn-1668. The LDL-receptor class A 7 domain occupies 1660–1700; the sequence is PCPEFSCPNGTCIDFLLVCDGSPDCELADETEPSLDEQGCG. 9 disulfide bridges follow: Cys-1661-Cys-1671, Cys-1666-Cys-1684, Cys-1678-Cys-1699, Cys-1711-Cys-1747, Cys-1715-Cys-1752, Cys-1726-Cys-1737, Cys-1767-Cys-1964, Cys-1771-Cys-1969, and Cys-1781-Cys-1791. 2 consecutive TSP type-1 domains span residues 1699 to 1753 and 1755 to 1970; these read CGTW…EACP and DGEW…EPCE. Residue Asn-1725 is glycosylated (N-linked (GlcNAc...) asparagine). Asn-1814 carries an N-linked (GlcNAc...) asparagine glycan. EGF-like domains follow at residues 1829–1868 and 1869–1895; these read CPLTCDDISGEAVCSPDRPCSSPGCWCPEGKVLGTEGRCV and RPRQCPCLVDGIRYWPGQRIKMDCQLC. The VWFC 1 domain maps to 1970–2030; the sequence is EGCEQWGLTY…GMGESCCHCA (61 aa). Asn-2035 carries N-linked (GlcNAc...) asparagine glycosylation. Intrachain disulfides connect Cys-2070/Cys-2226, Cys-2236/Cys-2248, Cys-2243/Cys-2261, and Cys-2255/Cys-2270. An F5/8 type C domain is found at 2070–2226; it reads CYSPLGLAGL…IFLWVELLGC (157 aa). Residues 2087-2109 form a disordered region; sequence PLEHSTRAAPVEAPTAGPGPRED. Asn-2130 and Asn-2148 each carry an N-linked (GlcNAc...) asparagine glycan. An LDL-receptor class A 8 domain is found at 2235-2271; it reads LCPGTRHRCANGDCALKGGPCDGAVDCEDGSDEEGCG. Residues 2262–2335 are disordered; the sequence is EDGSDEEGCG…SPSASEGLLP (74 aa). Residues 2276–2294 show a composition bias toward polar residues; sequence STASRVHSTARTPALSPTQ. Positions 2301–2314 are enriched in basic and acidic residues; it reads HPREGLADMEHQQP. 2 LDL-receptor class A domains span residues 2391–2427 and 2448–2484; these read RCGPGQVPCDVLGCVEQEQLCDGREDCLDGSDEQHCA and LCSPSQLSCGSGECLPLEHRCDLQVNCQDGSDEDDCV. Disulfide bonds link Cys-2392–Cys-2404, Cys-2399–Cys-2417, Cys-2411–Cys-2426, Cys-2449–Cys-2461, Cys-2456–Cys-2474, Cys-2468–Cys-2483, Cys-2486–Cys-2522, Cys-2497–Cys-2501, Cys-2532–Cys-2537, Cys-2552–Cys-2589, Cys-2556–Cys-2594, and Cys-2567–Cys-2579. TSP type-1 domains are found at residues 2485–2538 and 2540–2595; these read DCVL…QACP and AGAW…QLCP. Residues 2618–2660 form the TIL 4 domain; the sequence is PPCPPSCLDPEANRSCSGHCVEGCRCPPGLFLQDSHCLPLSEC. Residues Asn-2630 and Asn-2679 are each glycosylated (N-linked (GlcNAc...) asparagine). TSP type-1 domains follow at residues 2700-2754, 2758-2813, and 2815-2868; these read SCGW…TDCG, PGWT…SLCP, and PSAW…HPCT. Cystine bridges form between Cys-2701/Cys-2739, Cys-2712/Cys-2716, Cys-2749/Cys-2753, Cys-2769/Cys-2807, Cys-2773/Cys-2812, Cys-2789/Cys-2797, Cys-2827/Cys-2862, Cys-2831/Cys-2867, and Cys-2842/Cys-2852. N-linked (GlcNAc...) asparagine glycosylation is found at Asn-2921 and Asn-2951. TSP type-1 domains lie at 2969–3024 and 3025–3068; these read ACGW…RPCQ and GPGA…QPCA. 3 disulfides stabilise this stretch: Cys-2970-Cys-3008, Cys-2981-Cys-2985, and Cys-3018-Cys-3023. N-linked (GlcNAc...) asparagine glycosylation is found at Asn-3046, Asn-3101, Asn-3148, and Asn-3158. The 53-residue stretch at 3075–3127 folds into the TIL 5 domain; that stretch reads CPKDQQWLDCAQGPASCAHLSTPREANQTCHPGCYCLSGMLLLNNVCVPAQDC. 2 TSP type-1 domains span residues 3168 to 3235 and 3237 to 3292; these read QPAW…PGCN and AGVW…QPCP. 6 disulfide bridges follow: Cys-3180–Cys-3229, Cys-3184–Cys-3234, Cys-3195–Cys-3219, Cys-3249–Cys-3286, Cys-3253–Cys-3291, and Cys-3264–Cys-3276. Asn-3295 carries N-linked (GlcNAc...) asparagine glycosylation. Residues 3300–3350 enclose the TIL 6 domain; sequence EGAEYSPCGPPCPRSCDDLVHCMWHCQPGCYCPPGKVLSADGAICVQPHHC. A glycan (N-linked (GlcNAc...) asparagine) is linked at Asn-3384. TSP type-1 domains lie at 3393-3455 and 3457-3512; these read SGDW…TACP and DGAW…TPCT. 6 disulfides stabilise this stretch: Cys-3405/Cys-3448, Cys-3409/Cys-3454, Cys-3420/Cys-3432, Cys-3469/Cys-3504, Cys-3472/Cys-3511, and Cys-3482/Cys-3494. The N-linked (GlcNAc...) asparagine glycan is linked to Asn-3506. Positions 3514–3570 constitute a TIL 7 domain; sequence CGGGQDLLPCGQPCPHSCQDLSLGSTCQPGSSGCQSGCGCPPGQLSQDGLCVFPADC. 2 N-linked (GlcNAc...) asparagine glycosylation sites follow: Asn-3584 and Asn-3611. The 49-residue stretch at 3630–3678 folds into the TSP type-1 14 domain; sequence PGIWSSWGPWEKCSVPCGGGEQLRSRQCARPPCPGLAQQSRTCHIHVCR. Intrachain disulfides connect Cys-3642/Cys-3672, Cys-3646/Cys-3677, and Cys-3657/Cys-3662. N-linked (GlcNAc...) asparagine glycosylation occurs at Asn-3787. TSP type-1 domains follow at residues 3806–3862, 3876–3928, 3942–3998, and 4000–4055; these read RGYF…PECP, AGGW…PSCT, NCFW…RACP, and PGGW…MPCE. Cystine bridges form between Cys-3818–Cys-3856, Cys-3822–Cys-3861, and Cys-3834–Cys-3846. Residue Asn-3910 is glycosylated (N-linked (GlcNAc...) asparagine). 6 disulfide bridges follow: Cys-3943–Cys-3979, Cys-3954–Cys-3958, Cys-3992–Cys-3997, Cys-4012–Cys-4049, Cys-4016–Cys-4054, and Cys-4027–Cys-4039. Residues 4058–4113 enclose the TIL 8 domain; sequence CPAGMEMVSCANRCPYSCSDLQEAVMCQEDQACQLGCRCSEGFLEQDGGCVPVGHC. The N-linked (GlcNAc...) asparagine glycan is linked to Asn-4135. 4 consecutive TSP type-1 domains span residues 4155 to 4208, 4249 to 4304, 4306 to 4362, and 4364 to 4418; these read HCAW…DPCP, PGGW…QLCL, LLEI…GPCQ, and DCMW…GNCS. Cystine bridges form between Cys-4156–Cys-4192, Cys-4167–Cys-4171, Cys-4202–Cys-4207, Cys-4261–Cys-4298, Cys-4265–Cys-4303, and Cys-4276–Cys-4288. An N-linked (GlcNAc...) asparagine glycan is attached at Asn-4345. 3 disulfides stabilise this stretch: Cys-4365-Cys-4402, Cys-4376-Cys-4378, and Cys-4412-Cys-4417. The N-linked (GlcNAc...) asparagine glycan is linked to Asn-4416. The region spanning 4422-4477 is the TIL 9 domain; the sequence is CLPPFEFQSCGSPCAGLCATHLSHQLCQDLPPCQPGCYCPMGLLEQDGGCILPEQC. Asn-4557 carries N-linked (GlcNAc...) asparagine glycosylation. A TSP type-1 23 domain is found at 4608–4659; the sequence is TCQWGPWGPWSPCQVPCSGGFKLRWREASDNSVGECRGPWAQTESCNMGSCP. 3 disulfides stabilise this stretch: Cys-4609/Cys-4643, Cys-4620/Cys-4624, and Cys-4653/Cys-4658. Residues 4673–4719 enclose the TIL 10 domain; it reads DCANQCPRSCADLWEGVQCLQGPCSPGCRCPPGQLVQDGHCVPISSC. N-linked (GlcNAc...) asparagine glycans are attached at residues Asn-4727, Asn-4744, and Asn-4749. The 54-residue stretch at 4759 to 4812 folds into the TSP type-1 24 domain; the sequence is CPVLGPWSPWSECSAVCGGGTMVRYRSCEEHPDSAPCQALDMEQRVECNLQTCP. 3 disulfide bridges follow: Cys-4771–Cys-4806, Cys-4775–Cys-4811, and Cys-4786–Cys-4795. The TIL 11 domain maps to 4814–4868; it reads CPPGQVLSTCATLCPSFCSHLWPGTICVREPCQLGCGCPGGQLLHSGTCIPPEAC. 3 N-linked (GlcNAc...) asparagine glycosylation sites follow: Asn-4899, Asn-4942, and Asn-4949. The TIL 12 domain maps to 4920 to 4978; sequence CPPGEILQLGELRPCEKTCLEMNKTQAWSNCTEAQVPGCVCQLGHFRSHTGLCVPEDHC. A VWFC 2 domain is found at 4978 to 5036; the sequence is CECWHHGSPHLPGSEWQEACESCRCLHGKSVCTQHCPELSCAQGEVVVQEPGSCCPICQ. 4 cysteine pairs are disulfide-bonded: Cys-5047–Cys-5095, Cys-5061–Cys-5112, Cys-5071–Cys-5128, and Cys-5075–Cys-5130. The 88-residue stretch at 5047–5134 folds into the CTCK domain; sequence CRHLTELRNL…IHNCHCSACQ (88 aa). Residue Asn-5055 is glycosylated (N-linked (GlcNAc...) asparagine).

It belongs to the thrombospondin family.

It localises to the secreted. The protein resides in the extracellular space. Its function is as follows. Involved in the modulation of neuronal aggregation. May be involved in developmental events during the formation of the central nervous system. The sequence is that of SCO-spondin from Rattus norvegicus (Rat).